The chain runs to 910 residues: DNA mismatch repair protein MutS (910 aa).

Basic and acidic residues predominate over residues 1-11; it reads MEAKVEEKEPE. Residues 1–21 are disordered; the sequence is MEAKVEEKEPEPVENAGPDAP. Residue 658–665 participates in ATP binding; sequence GPNMGGKS.

Belongs to the DNA mismatch repair MutS family.

In terms of biological role, this protein is involved in the repair of mismatches in DNA. It is possible that it carries out the mismatch recognition step. This protein has a weak ATPase activity. This Brucella suis (strain ATCC 23445 / NCTC 10510) protein is DNA mismatch repair protein MutS.